Here is a 484-residue protein sequence, read N- to C-terminus: Transmembrane protein 161B (484 aa).

The helical transmembrane segment at 108–128 (LVDFTVAATVVYLITELYFCV) threads the bilayer. N-linked (GlcNAc...) asparagine glycosylation occurs at Asn136. Helical transmembrane passes span 137–157 (ISVV…FSLT) and 170–190 (SLCI…LIVT). An N-linked (GlcNAc...) asparagine glycan is attached at Asn204. 4 helical membrane passes run 229 to 249 (FKLI…FPGL), 266 to 286 (VTQT…LLWV), 368 to 388 (VFYY…MLLH), and 456 to 476 (LSFF…FGLF).

The protein belongs to the TMEM161 family.

It is found in the cell membrane. In terms of biological role, essential for maintaining normal cardiac rhythm in the developing heart and for neonatal survival. Inhibits potassium and calcium currents in the cardiomyocytes, this assists in timely action potential repolarization and thereby maintains normal cardiac rhythm. This is Transmembrane protein 161B (tmem161b) from Danio rerio (Zebrafish).